The chain runs to 162 residues: Ecotin (162 aa).

The signal sequence occupies residues 1 to 18 (MFVPAVVFAALASTSAWA). Cys70 and Cys107 form a disulfide bridge.

It belongs to the protease inhibitor I11 (ecotin) family. As to quaternary structure, homodimer.

The protein localises to the periplasm. In terms of biological role, general inhibitor of pancreatic serine proteases: inhibits chymotrypsin, trypsin, elastases, factor X, kallikrein as well as a variety of other proteases. The protein is Ecotin of Salmonella choleraesuis (strain SC-B67).